Here is a 393-residue protein sequence, read N- to C-terminus: NAD(P)H-quinone oxidoreductase subunit H, chloroplastic (393 aa).

It belongs to the complex I 49 kDa subunit family. In terms of assembly, NDH is composed of at least 16 different subunits, 5 of which are encoded in the nucleus.

Its subcellular location is the plastid. It localises to the chloroplast thylakoid membrane. The enzyme catalyses a plastoquinone + NADH + (n+1) H(+)(in) = a plastoquinol + NAD(+) + n H(+)(out). The catalysed reaction is a plastoquinone + NADPH + (n+1) H(+)(in) = a plastoquinol + NADP(+) + n H(+)(out). Its function is as follows. NDH shuttles electrons from NAD(P)H:plastoquinone, via FMN and iron-sulfur (Fe-S) centers, to quinones in the photosynthetic chain and possibly in a chloroplast respiratory chain. The immediate electron acceptor for the enzyme in this species is believed to be plastoquinone. Couples the redox reaction to proton translocation, and thus conserves the redox energy in a proton gradient. This chain is NAD(P)H-quinone oxidoreductase subunit H, chloroplastic, found in Trifolium subterraneum (Subterranean clover).